The primary structure comprises 145 residues: MTKSYRQGQILKLIRGKRIGTQDELAQELKSQGIAATQVTLSRDIRDLRLVKTREGYKEMAEEEQGPQFSLLAGEFLRDVLRAQNLVVLKTSPGHANSVAVALDNEEWPEVVGTIAGDDTILVIAPDTPTAEAVQEKLLGLLEHQ.

It belongs to the ArgR family.

It localises to the cytoplasm. It participates in amino-acid biosynthesis; L-arginine biosynthesis [regulation]. Regulates arginine biosynthesis genes. The sequence is that of Arginine repressor from Solibacter usitatus (strain Ellin6076).